The following is a 139-amino-acid chain: Putative nickel-responsive regulator (139 aa).

Ni(2+) contacts are provided by His-79, His-90, His-92, and Cys-98.

The protein belongs to the transcriptional regulatory CopG/NikR family. It depends on Ni(2+) as a cofactor.

Functionally, transcriptional regulator. In Geobacter metallireducens (strain ATCC 53774 / DSM 7210 / GS-15), this protein is Putative nickel-responsive regulator.